The primary structure comprises 538 residues: uncharacterized protein (538 aa).

An N-terminal signal peptide occupies residues 1 to 17; the sequence is MSFSATILFSPPSGSEA. Residues 101-131 form a disordered region; sequence RQGKVSIPDEDGESRAHSSPPEEPGPLKESP. Residues Lys128 and Lys221 each participate in a glycyl lysine isopeptide (Lys-Gly) (interchain with G-Cter in SUMO2) cross-link. A Phosphoserine modification is found at Ser224. Positions 233 to 253 are disordered; sequence RATPETGPENGTKLPPPRPED. 2 positions are modified to phosphoserine: Ser285 and Ser428. The segment at 488–523 is disordered; that stretch reads LPPELYNPNFQEEEDEGGDENAPGSPSFDQPHKTCC.

It localises to the secreted. This is an uncharacterized protein from Homo sapiens (Human).